The following is a 156-amino-acid chain: Cyanate hydratase (156 aa).

Catalysis depends on residues Arg96, Glu99, and Ser122.

It belongs to the cyanase family.

It carries out the reaction cyanate + hydrogencarbonate + 3 H(+) = NH4(+) + 2 CO2. Functionally, catalyzes the reaction of cyanate with bicarbonate to produce ammonia and carbon dioxide. This chain is Cyanate hydratase, found in Pseudomonas aeruginosa (strain LESB58).